The chain runs to 278 residues: Elongation factor Ts 2, mitochondrial (278 aa).

Belongs to the EF-Ts family.

Its subcellular location is the mitochondrion. Associates with the EF-Tu.GDP complex and induces the exchange of GDP to GTP. It remains bound to the aminoacyl-tRNA.EF-Tu.GTP complex up to the GTP hydrolysis stage on the ribosome. This chain is Elongation factor Ts 2, mitochondrial, found in Trypanosoma cruzi (strain CL Brener).